Reading from the N-terminus, the 147-residue chain is Putative pre-16S rRNA nuclease (147 aa).

Belongs to the YqgF nuclease family.

The protein resides in the cytoplasm. Its function is as follows. Could be a nuclease involved in processing of the 5'-end of pre-16S rRNA. The sequence is that of Putative pre-16S rRNA nuclease from Ureaplasma parvum serovar 3 (strain ATCC 27815 / 27 / NCTC 11736).